We begin with the raw amino-acid sequence, 864 residues long: Leucine--tRNA ligase (864 aa).

Residues 47–57 (PYPSGNLHMGH) carry the 'HIGH' region motif. Residues 298–317 (SEQDRVADDRPKRGVATGGT) form a disordered region. Over residues 299 to 309 (EQDRVADDRPK) the composition is skewed to basic and acidic residues. Residues 622-626 (KMSKS) carry the 'KMSKS' region motif. Residue Lys625 participates in ATP binding.

Belongs to the class-I aminoacyl-tRNA synthetase family.

It is found in the cytoplasm. The enzyme catalyses tRNA(Leu) + L-leucine + ATP = L-leucyl-tRNA(Leu) + AMP + diphosphate. The polypeptide is Leucine--tRNA ligase (Synechococcus sp. (strain RCC307)).